The sequence spans 366 residues: Chorismate synthase (366 aa).

NADP(+) is bound by residues R48 and R54. FMN is bound by residues 131–133 (RAS), 243–244 (NA), G288, 303–307 (KPTPS), and R329.

This sequence belongs to the chorismate synthase family. Homotetramer. FMNH2 serves as cofactor.

It carries out the reaction 5-O-(1-carboxyvinyl)-3-phosphoshikimate = chorismate + phosphate. Its pathway is metabolic intermediate biosynthesis; chorismate biosynthesis; chorismate from D-erythrose 4-phosphate and phosphoenolpyruvate: step 7/7. Its function is as follows. Catalyzes the anti-1,4-elimination of the C-3 phosphate and the C-6 proR hydrogen from 5-enolpyruvylshikimate-3-phosphate (EPSP) to yield chorismate, which is the branch point compound that serves as the starting substrate for the three terminal pathways of aromatic amino acid biosynthesis. This reaction introduces a second double bond into the aromatic ring system. This chain is Chorismate synthase, found in Bartonella quintana (strain Toulouse) (Rochalimaea quintana).